Consider the following 167-residue polypeptide: uncharacterized protein (167 aa).

It is found in the mitochondrion. This is an uncharacterized protein from Marchantia polymorpha (Common liverwort).